The chain runs to 284 residues: Acetylglutamate kinase (284 aa).

Substrate is bound by residues G64–G65, R86, and N181.

This sequence belongs to the acetylglutamate kinase family. ArgB subfamily.

It localises to the cytoplasm. The catalysed reaction is N-acetyl-L-glutamate + ATP = N-acetyl-L-glutamyl 5-phosphate + ADP. It functions in the pathway amino-acid biosynthesis; L-arginine biosynthesis; N(2)-acetyl-L-ornithine from L-glutamate: step 2/4. Functionally, catalyzes the ATP-dependent phosphorylation of N-acetyl-L-glutamate. In Wolinella succinogenes (strain ATCC 29543 / DSM 1740 / CCUG 13145 / JCM 31913 / LMG 7466 / NCTC 11488 / FDC 602W) (Vibrio succinogenes), this protein is Acetylglutamate kinase.